The following is a 590-amino-acid chain: G protein-coupled receptor kinase 5 (590 aa).

The segment at 1 to 185 is N-terminal; it reads MELENIVANT…LERQPVTKNT (185 aa). The interaction with calmodulin stretch occupies residues 20 to 39; the sequence is GGKRKGKSKKWKEILKFPHI. The RGS domain occupies 53-171; that stretch reads YYSLCDKQPI…LDSMYFDRFL (119 aa). Serine 136 bears the Phosphoserine mark. The Protein kinase domain maps to 186–448; sequence FRQYRVLGKG…AAEVKRHPFF (263 aa). ATP-binding positions include 192–200 and lysine 215; that span reads LGKGGFGEV. The active-site Proton acceptor is the aspartate 311. The Nuclear localization signal motif lies at 388 to 395; the sequence is RKEKVKRE. Positions 449–514 constitute an AGC-kinase C-terminal domain; that stretch reads RNMNFKRLEA…GSVPIPWQNE (66 aa). Phosphoserine; by autocatalysis is present on serine 484. At threonine 485 the chain carries Phosphothreonine; by autocatalysis. The tract at residues 546–565 is sufficient for membrane localization; it reads PKKGLFHRLFRRQHQSNSKS. Positions 557-590 are disordered; it reads RQHQSNSKSSPTPKTSCNHRINSNHINSNSTGSS. Residues 561–590 show a composition bias toward low complexity; the sequence is SNSKSSPTPKTSCNHRINSNHINSNSTGSS. Serine 579 bears the Phosphoserine mark.

The protein belongs to the protein kinase superfamily. AGC Ser/Thr protein kinase family. GPRK subfamily. As to quaternary structure, interacts with ST13 (via the C-terminus 303-319 AA). Interacts with TP53/p53. Interacts with HTR4 (via C-terminus 330-346 AA); this interaction is promoted by 5-HT (serotonin). Interacts with HDAC5. Interacts with GIT1. Autophosphorylated. Autophosphorylation may play a critical role in the regulation of GRK5 kinase activity.

The protein resides in the cytoplasm. The protein localises to the nucleus. Its subcellular location is the cell membrane. The catalysed reaction is [G-protein-coupled receptor] + ATP = [G-protein-coupled receptor]-phosphate + ADP + H(+). Inhibited by calmodulin with an IC(50) of 50 nM. Calmodulin inhibits GRK5 association with receptor and phospholipid. Serine/threonine kinase that phosphorylates preferentially the activated forms of a variety of G-protein-coupled receptors (GPCRs). Such receptor phosphorylation initiates beta-arrestin-mediated receptor desensitization, internalization, and signaling events leading to their down-regulation. Phosphorylates a variety of GPCRs, including adrenergic receptors, muscarinic acetylcholine receptors (more specifically Gi-coupled M2/M4 subtypes), dopamine receptors and opioid receptors. In addition to GPCRs, also phosphorylates various substrates: Hsc70-interacting protein/ST13, TP53/p53, HDAC5, and arrestin-1/ARRB1. Phosphorylation of ARRB1 by GRK5 inhibits G-protein independent MAPK1/MAPK3 signaling downstream of 5HT4-receptors. Phosphorylation of HDAC5, a repressor of myocyte enhancer factor 2 (MEF2) leading to nuclear export of HDAC5 and allowing MEF2-mediated transcription. Phosphorylation of TP53/p53, a crucial tumor suppressor, inhibits TP53/p53-mediated apoptosis. Phosphorylation of ST13 regulates internalization of the chemokine receptor. Phosphorylates rhodopsin (RHO) (in vitro) and a non G-protein-coupled receptor, LRP6 during Wnt signaling (in vitro). This chain is G protein-coupled receptor kinase 5 (Grk5), found in Mus musculus (Mouse).